Consider the following 263-residue polypeptide: Achaete-scute homolog 2 (263 aa).

Disordered regions lie at residues 104-126 (RRRRSGATEASSSSAAVARRNER) and 194-248 (PPSD…ELSP). 3 stretches are compositionally biased toward low complexity: residues 110–121 (ATEASSSSAAVA), 202–220 (PSASPASASLSCASTSPSP), and 230–247 (SPRSAYSSEESSCEGELS). One can recognise a bHLH domain in the interval 118 to 170 (AAVARRNERERNRVKLVNLGFQALRQHVPHGGANKKLSKVETLRSAVEYIRAL).

In terms of assembly, efficient DNA binding requires dimerization with another basic helix-loop-helix (bHLH) protein. Forms heterodimers with bHLH transcription factor TCF3. May not heterodimerise with bHLH protein HAND1. Expressed in follicular T-helper (Tfh) cells.

Its subcellular location is the nucleus. Functionally, transcription factor. Binds to E-box motifs 5'-CANNTG-3' in the regulatory elements of target genes, probably as a heterodimer with another basic helix-loop-helix (bHLH) protein such as the transcription factor TCF3. May bind both open and closed chromatin, acting as a pioneer transcription factor to allow other factors to bind and activate lineage-specific genes. Required during post-implantation development for the generation of some differentiated trophoblast cell types. Transcriptional activity of ASCL2 may be antagonised in a subset of trophoblast cells by bHLH transcription factor HAND1, perhaps by competing for dimerization with other bHLH proteins. Involved in differentiation and function of follicular T-helper (Tfh) cells, thereby playing a role in germinal center responses; probably modulates expression of genes involved in Tfh cell function, such as BCL6. May also act as a suppressor of Th1-, Th2- and Th17-cell differentiation. Induces the formation of stem cells in intestinal crypts in vitro, synergistically activating transcription of target genes, such as SOX9, together with TCF4/beta-catenin. May form a bistable transcriptional switch, controlling expression of its own gene together with Wnt/R-spondin signaling, and thereby maintaining stem cell characteristics. Modulates expression of target genes, including perhaps down-regulating EGR1/Krox24 and chemokine CXCL10/Mob-1 and up-regulating CXCR4 and CDKN1C/p57kip2, in Schwann cells. May play a role in reducing proliferation of Schwann cells, perhaps acting via modulation of expression of CDKN1C. May be dispensable for blastocyst formation and later embryonic function. May be involved in the determination of neuronal precursors. The polypeptide is Achaete-scute homolog 2 (Ascl2) (Mus musculus (Mouse)).